A 214-amino-acid chain; its full sequence is Nucleoplasmin-2 (214 aa).

Residues glutamate 119–lysine 214 are disordered. Acidic residues predominate over residues threonine 127–leucine 155. Positions glutamate 129–aspartate 152 are acidic tract A2. Residues lysine 165–lysine 180 carry the Bipartite nuclear localization signal motif. Positions leucine 181 to proline 197 are enriched in basic and acidic residues. Over residues valine 198–lysine 214 the composition is skewed to basic residues.

Belongs to the nucleoplasmin family. In terms of assembly, homopentamer, when bound to H2A-H2B dimers only. Homodecamer of two stacked pentamers, when bound to H2A-H2B dimers and H3-H4 tetramers simultaneously.

The protein resides in the nucleus. Core histones chaperone involved in chromatin reprogramming, specially during fertilization and early embryonic development. Probably involved in sperm DNA decondensation during fertilization. This is Nucleoplasmin-2 (NPM2) from Homo sapiens (Human).